The chain runs to 1078 residues: Transmembrane protein 132B (1078 aa).

Over 1 to 903 (MFGAASRMDT…LTDLEIGMYA (903 aa)) the chain is Extracellular. N-linked (GlcNAc...) asparagine glycans are attached at residues Asn343, Asn366, and Asn381. The interval 834–887 (RGTPVGQEESTNKSTTPQSPMEGKNKLLKSGGPDAFTSFPTQGKSPDPNNPSDL) is disordered. Residues 841–852 (EESTNKSTTPQS) are compositionally biased toward polar residues. Residues 904–924 (LLCVFCLAILVFLINCVAFAW) form a helical membrane-spanning segment. Residues 925 to 1078 (KYRHKRFAVS…DYMESLQDQM (154 aa)) are Cytoplasmic-facing.

Belongs to the TMEM132 family.

It localises to the membrane. This Homo sapiens (Human) protein is Transmembrane protein 132B (TMEM132B).